A 283-amino-acid polypeptide reads, in one-letter code: 1-deoxypentalenic acid 11-beta-hydroxylase (283 aa).

Arginine 117 lines the substrate pocket. Fe cation-binding residues include histidine 135 and aspartate 137. 2-oxoglutarate contacts are provided by residues 135–137 (HQD) and tryptophan 151. Position 186 (arginine 186) interacts with substrate. Histidine 224 contributes to the Fe cation binding site. Residues serine 226 and arginine 238 each coordinate 2-oxoglutarate. Residues 260-283 (WPESAKDASKGILSKITGTPTTAE) are disordered.

The protein belongs to the PhyH family. The cofactor is Fe cation. Requires L-ascorbate as cofactor.

The enzyme catalyses 1-deoxypentalenate + 2-oxoglutarate + O2 = 1-deoxy-11beta-hydroxypentalenate + succinate + CO2. Its pathway is antibiotic biosynthesis; pentalenolactone biosynthesis. In terms of biological role, catalyzes the conversion of 1-deoxypentalenic acid to 11-beta-hydroxy-1-deoxypentalenic acid in the biosynthesis of pentalenolactone antibiotic. The chain is 1-deoxypentalenic acid 11-beta-hydroxylase (penH) from Streptomyces exfoliatus (Streptomyces hydrogenans).